The chain runs to 420 residues: Coiled-coil domain-containing protein 85C (420 aa).

Ala-2 bears the N-acetylalanine mark. 2 coiled-coil regions span residues 26–92 (ELLR…RELC) and 122–165 (HEVA…LAAA). A disordered region spans residues 165-271 (AGGAGGGGGG…NGLHDPSSTY (107 aa)). Residues 166–176 (GGAGGGGGGAG) show a composition bias toward gly residues. Ser-179 carries the post-translational modification Phosphoserine. The span at 185–212 (ASLSGPLAGSAAGSGARDVGDGSSTSSA) shows a compositional bias: low complexity. Ser-247 is modified (phosphoserine).

It belongs to the CCDC85 family. As to quaternary structure, may interact with ARVCF, CTNND1, CTNND2 and PKP4. As to expression, predominantly expressed on the surface of the lateral ventricular walls of the developing cerebral cortex.

It localises to the cell junction. Its subcellular location is the tight junction. The protein resides in the adherens junction. May play a role in cell-cell adhesion and epithelium development through its interaction with proteins of the beta-catenin family. May play an important role in cortical development, especially in the maintenance of radial glia. This chain is Coiled-coil domain-containing protein 85C (Ccdc85c), found in Mus musculus (Mouse).